A 787-amino-acid polypeptide reads, in one-letter code: Putative pentatricopeptide repeat-containing protein At1g69350, mitochondrial (787 aa).

The transit peptide at 1–16 (MTQYMPLFRSCSSLRL) directs the protein to the mitochondrion. 19 PPR repeats span residues 33–63 (DPLP…FPYP), 64–98 (DSFM…TTQI), 99–134 (SKFV…GVDD), 135–165 (DAVI…MPVR), 166–200 (DLVA…GVEP), 201–235 (DAVT…MFDL), 236–266 (DETL…IAKK), 267–301 (NAVS…GIEP), 302–336 (NLVT…ELDP), 338–368 (YESL…VSDR), 369–403 (NIVA…RIKP), 404–434 (DAFT…VIRT), 438–468 (DEFV…IKHR), 469–503 (SVVT…YLEM), 504–534 (NEVT…LIIS), 538–568 (DLFT…MSSR), 569–603 (SIVS…GTKP), 604–638 (NEVV…GVSP), and 639–669 (NSEH…MPFL). Positions 674-749 (VWGSLVNGCR…VPGYSAIEID (76 aa)) are type E motif. Positions 750-780 (QKVFRFGAGEENRIQTDEIYRFLGNLQNLTN) are type E(+) motif.

It belongs to the PPR family. PCMP-E subfamily.

The protein localises to the mitochondrion. The protein is Putative pentatricopeptide repeat-containing protein At1g69350, mitochondrial (PCMP-E66) of Arabidopsis thaliana (Mouse-ear cress).